The primary structure comprises 58 residues: Sec-independent protein translocase protein TatA (58 aa).

A helical membrane pass occupies residues 1–21; sequence MLSNIGFPGLILILVAILILF.

The protein belongs to the TatA/E family. Forms a complex with TatC.

The protein resides in the cell membrane. Its function is as follows. Part of the twin-arginine translocation (Tat) system that transports large folded proteins containing a characteristic twin-arginine motif in their signal peptide across membranes. TatA could form the protein-conducting channel of the Tat system. This Bacillus cytotoxicus (strain DSM 22905 / CIP 110041 / 391-98 / NVH 391-98) protein is Sec-independent protein translocase protein TatA.